A 280-amino-acid chain; its full sequence is Vitamin B12-binding protein (280 aa).

The signal sequence occupies residues 1–27 (MMPLGLFPLPRAAAVLLISLLTLPAQA). The Fe/B12 periplasmic-binding domain maps to 30 to 277 (RVISLSPSTT…QMASIPTPVA (248 aa)). Tyrosine 57 serves as a coordination point for cyanocob(III)alamin. A disulfide bridge links cysteine 190 with cysteine 266.

It belongs to the BtuF family. The complex is composed of two ATP-binding proteins (BtuD), two transmembrane proteins (BtuC) and a solute-binding protein (BtuF).

The protein localises to the periplasm. Part of the ABC transporter complex BtuCDF involved in vitamin B12 import. Binds vitamin B12 and delivers it to the periplasmic surface of BtuC. The polypeptide is Vitamin B12-binding protein (Yersinia pseudotuberculosis serotype O:3 (strain YPIII)).